The following is a 615-amino-acid chain: DNA mismatch repair protein MutL (615 aa).

Residues 362–397 (HFAEPAVREPVAPRYSPAPASGGRPAASWPNAQPGY) form a disordered region. Residues 378 to 391 (PAPASGGRPAASWP) are compositionally biased toward low complexity.

The protein belongs to the DNA mismatch repair MutL/HexB family.

In terms of biological role, this protein is involved in the repair of mismatches in DNA. It is required for dam-dependent methyl-directed DNA mismatch repair. May act as a 'molecular matchmaker', a protein that promotes the formation of a stable complex between two or more DNA-binding proteins in an ATP-dependent manner without itself being part of a final effector complex. The polypeptide is DNA mismatch repair protein MutL (Escherichia fergusonii (strain ATCC 35469 / DSM 13698 / CCUG 18766 / IAM 14443 / JCM 21226 / LMG 7866 / NBRC 102419 / NCTC 12128 / CDC 0568-73)).